Consider the following 129-residue polypeptide: Small ribosomal subunit protein uS11 (129 aa).

This sequence belongs to the universal ribosomal protein uS11 family. As to quaternary structure, part of the 30S ribosomal subunit. Interacts with proteins S7 and S18. Binds to IF-3.

Functionally, located on the platform of the 30S subunit, it bridges several disparate RNA helices of the 16S rRNA. Forms part of the Shine-Dalgarno cleft in the 70S ribosome. The sequence is that of Small ribosomal subunit protein uS11 from Nitrosomonas eutropha (strain DSM 101675 / C91 / Nm57).